Reading from the N-terminus, the 95-residue chain is Small ribosomal subunit protein bS20c (95 aa).

The protein belongs to the bacterial ribosomal protein bS20 family.

Its subcellular location is the plastid. It localises to the chloroplast. Its function is as follows. Binds directly to 16S ribosomal RNA. The chain is Small ribosomal subunit protein bS20c from Pyropia yezoensis (Susabi-nori).